Consider the following 149-residue polypeptide: Oligosaccharyltransferase complex subunit OSTC (149 aa).

Topologically, residues 1–32 (METLYRVPFLVLECPNLKLKKPPWVHMPSAMT) are cytoplasmic. The helical transmembrane segment at 33–53 (VYALVVVSYFLITGGIIYDVI) threads the bilayer. At 54–83 (VEPPSVGSMTDEHGHQRPVAFLAYRVNGQY) the chain is on the extracellular side. Residues 84–104 (IMEGLASSFLFTMGGLGFIIL) form a helical membrane-spanning segment. Over 105-117 (DRSNAPNIPKLNR) the chain is Cytoplasmic. The helical transmembrane segment at 118–138 (FLLLFIGFVCVLLSFFMARVF) threads the bilayer. Topologically, residues 139–149 (MRMKLPGYLMG) are extracellular.

Belongs to the OSTC family. In terms of assembly, component of STT3A-containing oligosaccharyl transferase (OST-A) complex. STT3A-containing complex assembly occurs through the formation of 3 subcomplexes. Subcomplex 1 contains RPN1 and TMEM258, subcomplex 2 contains the STT3A-specific subunits STT3A, DC2/OSTC, and KCP2 as well as the core subunit OST4, and subcomplex 3 contains RPN2, DAD1, and OST48. The OST-A complex can form stable complexes with the Sec61 complex or with both the Sec61 and TRAP complexes. Interacts with PSEN1 and NCSTN; indicative for an association with the gamma-secretase complex.

It is found in the endoplasmic reticulum. It localises to the membrane. Its pathway is protein modification; protein glycosylation. Subunit of STT3A-containing oligosaccharyl transferase (OST-A) complex that catalyzes the initial transfer of a defined glycan (Glc(3)Man(9)GlcNAc(2) in eukaryotes) from the lipid carrier dolichol-pyrophosphate to an asparagine residue within an Asn-X-Ser/Thr consensus motif in nascent polypeptide chains, the first step in protein N-glycosylation. N-glycosylation occurs cotranslationally and the complex associates with the Sec61 complex at the channel-forming translocon complex that mediates protein translocation across the endoplasmic reticulum (ER). Within the OST-A complex, acts as an adapter that anchors the OST-A complex to the Sec61 complex. May be involved in N-glycosylation of APP (amyloid-beta precursor protein). Can modulate gamma-secretase cleavage of APP by enhancing endoprotelysis of PSEN1. In Canis lupus familiaris (Dog), this protein is Oligosaccharyltransferase complex subunit OSTC.